The following is a 105-amino-acid chain: Large ribosomal subunit protein uL24 (105 aa).

Belongs to the universal ribosomal protein uL24 family. Part of the 50S ribosomal subunit.

In terms of biological role, one of two assembly initiator proteins, it binds directly to the 5'-end of the 23S rRNA, where it nucleates assembly of the 50S subunit. Functionally, one of the proteins that surrounds the polypeptide exit tunnel on the outside of the subunit. This chain is Large ribosomal subunit protein uL24, found in Clostridium novyi (strain NT).